Here is a 202-residue protein sequence, read N- to C-terminus: Small ribosomal subunit protein uS4c (202 aa).

One can recognise an S4 RNA-binding domain in the interval 90-153 (MRLDNVIFRL…KSEAIISKNI (64 aa)).

This sequence belongs to the universal ribosomal protein uS4 family. As to quaternary structure, part of the 30S ribosomal subunit. Contacts protein S5. The interaction surface between S4 and S5 is involved in control of translational fidelity.

The protein resides in the plastid. It localises to the chloroplast. One of the primary rRNA binding proteins, it binds directly to 16S rRNA where it nucleates assembly of the body of the 30S subunit. In terms of biological role, with S5 and S12 plays an important role in translational accuracy. The chain is Small ribosomal subunit protein uS4c (rps4) from Hypopterygium didictyon.